A 457-amino-acid polypeptide reads, in one-letter code: UDP-N-acetylmuramoylalanine--D-glutamate ligase (457 aa).

Residue 126 to 132 (GTAGKGS) coordinates ATP.

It belongs to the MurCDEF family.

It is found in the cytoplasm. The enzyme catalyses UDP-N-acetyl-alpha-D-muramoyl-L-alanine + D-glutamate + ATP = UDP-N-acetyl-alpha-D-muramoyl-L-alanyl-D-glutamate + ADP + phosphate + H(+). It participates in cell wall biogenesis; peptidoglycan biosynthesis. Cell wall formation. Catalyzes the addition of glutamate to the nucleotide precursor UDP-N-acetylmuramoyl-L-alanine (UMA). The protein is UDP-N-acetylmuramoylalanine--D-glutamate ligase of Deinococcus radiodurans (strain ATCC 13939 / DSM 20539 / JCM 16871 / CCUG 27074 / LMG 4051 / NBRC 15346 / NCIMB 9279 / VKM B-1422 / R1).